The sequence spans 175 residues: MEATIFEKRRSSLSSIAVHKQSYSITKSKPKIRIIHIFAPEIIKTDVANFRELVQSLTGKPDDQRTSKAKPRRDMHRLHRQVQDMINTEKLREPEHCDQEFCLNAEELSMTWNGNNGAGESSGGFLNGLGDFEGFIQELGEFPYLPLSSIDASASSNSSSSSHLHGGSVFSDQFA.

The short motif at 50–59 is the VQ element; the sequence is FRELVQSLTG.

It localises to the nucleus. In terms of biological role, may function as negative regulator of plant defense. The protein is VQ motif-containing protein 25 of Arabidopsis thaliana (Mouse-ear cress).